A 149-amino-acid polypeptide reads, in one-letter code: MNAVEIYTDGACKGNPGPGGWGAFLKSADSQKELFGGELGTTNNRMEMTAVIEALAALKRPCQVTLHVDSQYVLKGMTEWLAGWKARGWKTAAKQPVKNVDLWQRLDELVSTSGHRIDWRWVRGHNGDPGNEHADMLANRGVELALRQR.

One can recognise an RNase H type-1 domain in the interval 1–143 (MNAVEIYTDG…ADMLANRGVE (143 aa)). Mg(2+)-binding residues include Asp-9, Glu-47, Asp-69, and Asp-135.

It belongs to the RNase H family. Monomer. Requires Mg(2+) as cofactor.

It localises to the cytoplasm. It carries out the reaction Endonucleolytic cleavage to 5'-phosphomonoester.. Endonuclease that specifically degrades the RNA of RNA-DNA hybrids. This is Ribonuclease H from Albidiferax ferrireducens (strain ATCC BAA-621 / DSM 15236 / T118) (Rhodoferax ferrireducens).